Reading from the N-terminus, the 316-residue chain is Pantothenate kinase (316 aa).

Residue 95–102 (GSVAVGKS) coordinates ATP.

The protein belongs to the prokaryotic pantothenate kinase family.

It localises to the cytoplasm. The catalysed reaction is (R)-pantothenate + ATP = (R)-4'-phosphopantothenate + ADP + H(+). It functions in the pathway cofactor biosynthesis; coenzyme A biosynthesis; CoA from (R)-pantothenate: step 1/5. This is Pantothenate kinase from Enterobacter sp. (strain 638).